Reading from the N-terminus, the 77-residue chain is MNIKKRIIQIRFLNCTIIYLHCALFRSLLHNLFHRHVFCRRLSSRSIEYLRMRSQAAQNLLDICSVPFCRWRLLFCH.

This is an uncharacterized protein from Bacillus licheniformis.